The following is a 396-amino-acid chain: MEKLRSYEDFIFMANMMFKTLGYDLFHTPKPWWRYLLVRGYFVLCTISNFYEASMVTTRIIEWESLAGSPSKIMRQGLHFFYMLSSQLKFITFMINRKRLLQLSHRLKELYPHKEQNQRKYEVNKYYLSCSTRNVLYVYYFVMVVMALEPLVQSCIMYLIGFGKADFTYKRIFPTRLTFDSEKPLGYVLAYVIDFTYSQFIVNVSLGTDLWMMCVSSQISMHLGYLANMLASIRPSPETEQQDCDFLASIIKRHQLMIRLQKDVNYVFGLLLASNLFTTSCLLCCMAYYTVVEGFNWEGISYMMLFASVAAQFYVVSSHGQMLIDLSTNLAKAAFESKWYEGSLRYKKEILILMAQAQRPLEISARGVIIISLDTFKILMTITYRFFAVIRQTVEK.

The Cytoplasmic segment spans residues 1–6; the sequence is MEKLRS. A helical transmembrane segment spans residues 7-27; that stretch reads YEDFIFMANMMFKTLGYDLFH. Residues 28–34 are Extracellular-facing; that stretch reads TPKPWWR. A helical transmembrane segment spans residues 35–55; it reads YLLVRGYFVLCTISNFYEASM. Over 56 to 70 the chain is Cytoplasmic; that stretch reads VTTRIIEWESLAGSP. Residues 71 to 91 form a helical membrane-spanning segment; that stretch reads SKIMRQGLHFFYMLSSQLKFI. The Extracellular segment spans residues 92-141; that stretch reads TFMINRKRLLQLSHRLKELYPHKEQNQRKYEVNKYYLSCSTRNVLYVYYF. A helical membrane pass occupies residues 142–162; that stretch reads VMVVMALEPLVQSCIMYLIGF. Over 163–209 the chain is Cytoplasmic; the sequence is GKADFTYKRIFPTRLTFDSEKPLGYVLAYVIDFTYSQFIVNVSLGTD. Residues 210–230 traverse the membrane as a helical segment; it reads LWMMCVSSQISMHLGYLANML. Residues 231-266 lie on the Extracellular side of the membrane; sequence ASIRPSPETEQQDCDFLASIIKRHQLMIRLQKDVNY. A helical transmembrane segment spans residues 267 to 287; the sequence is VFGLLLASNLFTTSCLLCCMA. The Cytoplasmic segment spans residues 288–296; it reads YYTVVEGFN. A helical transmembrane segment spans residues 297–317; it reads WEGISYMMLFASVAAQFYVVS. The Extracellular segment spans residues 318–396; the sequence is SHGQMLIDLS…FAVIRQTVEK (79 aa).

The protein belongs to the insect chemoreceptor superfamily. Heteromeric odorant receptor channel (TC 1.A.69) family. Or49a subfamily. As to quaternary structure, interacts with Orco. Complexes exist early in the endomembrane system in olfactory sensory neurons (OSNs), coupling these complexes to the conserved ciliary trafficking pathway.

Its subcellular location is the cell membrane. Odorant receptor which mediates acceptance or avoidance behavior, depending on its substrates. The odorant receptor repertoire encodes a large collection of odor stimuli that vary widely in identity, intensity, and duration. May form a complex with Orco to form odorant-sensing units, providing sensitive and prolonged odorant signaling and calcium permeability. Involved in the behavioral responses to butanol and 2-heptanone. The chain is Odorant receptor 49a (Or49a) from Drosophila melanogaster (Fruit fly).